The sequence spans 503 residues: Probable 2-isopropylmalate synthase (503 aa).

The Pyruvate carboxyltransferase domain occupies 8-259 (IRVFDTTLRD…KTNIKTEHLF (252 aa)). A divalent metal cation contacts are provided by Asp-17, His-197, His-199, and Asn-233.

Belongs to the alpha-IPM synthase/homocitrate synthase family. Homodimer. Requires a divalent metal cation as cofactor.

It carries out the reaction 3-methyl-2-oxobutanoate + acetyl-CoA + H2O = (2S)-2-isopropylmalate + CoA + H(+). It participates in amino-acid biosynthesis; L-leucine biosynthesis; L-leucine from 3-methyl-2-oxobutanoate: step 1/4. Functionally, catalyzes the condensation of the acetyl group of acetyl-CoA with 3-methyl-2-oxobutanoate (2-oxoisovalerate) to form 3-carboxy-3-hydroxy-4-methylpentanoate (2-isopropylmalate). The chain is Probable 2-isopropylmalate synthase (leuA) from Archaeoglobus fulgidus (strain ATCC 49558 / DSM 4304 / JCM 9628 / NBRC 100126 / VC-16).